We begin with the raw amino-acid sequence, 572 residues long: Chromatin assembly factor 1 subunit B (572 aa).

WD repeat units follow at residues 11-54, 64-103, 127-166, 169-208, 228-279, 301-347, and 351-392; these read HNKE…DGKA, RHTK…EPEQ, GHLE…KISI, EHKS…VAFN, FHDD…RPIA, RPVA…PFGY, and IHYH…IPLK. The residue at position 401 (Thr401) is a Phosphothreonine. Residues 403 to 572 are disordered; it reads DTAKKAKNQT…LAPDDSSKTV (170 aa). Over residues 411-430 the composition is skewed to polar residues; sequence QTHQGSSPGSRSVEGTPSNR. At Ser416 the chain carries Phosphoserine. Residue Thr426 is modified to Phosphothreonine. Low complexity predominate over residues 431–452; the sequence is TQDPSSPCTTPSPTTQSPAPSA. Ser436 is modified (phosphoserine). Residue Thr440 is modified to Phosphothreonine. 2 positions are modified to phosphoserine: Ser456 and Ser465. Residue Lys501 is modified to N6-acetyllysine. 2 positions are modified to phosphothreonine: Thr502 and Thr510. Positions 511-529 are enriched in polar residues; that stretch reads PLKTDTVPNPQPNSGTAPS. Positions 546-559 are enriched in basic and acidic residues; it reads PELKRPRLEEREGD.

It belongs to the WD repeat HIR1 family. Subunit of the CAF-1 complex that contains RBBP4, CHAF1B and CHAF1A. CHAF1A binds directly to CHAF1B. Interacts with histones H3.1, H3.2 and H3.1t.

The protein localises to the nucleus. It is found in the cytoplasm. In terms of biological role, acts as a component of the histone chaperone complex chromatin assembly factor 1 (CAF-1), which assembles histone octamers onto DNA during replication and repair. CAF-1 performs the first step of the nucleosome assembly process, bringing newly synthesized histones H3 and H4 to replicating DNA; histones H2A/H2B can bind to this chromatin precursor subsequent to DNA replication to complete the histone octamer. The chain is Chromatin assembly factor 1 subunit B from Mus musculus (Mouse).